We begin with the raw amino-acid sequence, 753 residues long: 5-methyltetrahydropteroyltriglutamate--homocysteine methyltransferase (753 aa).

Residues 17–20 and lysine 117 each bind 5-methyltetrahydropteroyltri-L-glutamate; that span reads RELK. Residues 431-433 and glutamate 484 each bind L-homocysteine; that span reads IGS. L-methionine-binding positions include 431-433 and glutamate 484; that span reads IGS. 5-methyltetrahydropteroyltri-L-glutamate contacts are provided by residues 515-516 and tryptophan 561; that span reads RC. Position 599 (aspartate 599) interacts with L-homocysteine. Aspartate 599 serves as a coordination point for L-methionine. Glutamate 605 contributes to the 5-methyltetrahydropteroyltri-L-glutamate binding site. Residues histidine 641, cysteine 643, and glutamate 665 each coordinate Zn(2+). Histidine 694 serves as the catalytic Proton donor. Cysteine 726 lines the Zn(2+) pocket.

It belongs to the vitamin-B12 independent methionine synthase family. Zn(2+) is required as a cofactor.

The catalysed reaction is 5-methyltetrahydropteroyltri-L-glutamate + L-homocysteine = tetrahydropteroyltri-L-glutamate + L-methionine. The protein operates within amino-acid biosynthesis; L-methionine biosynthesis via de novo pathway; L-methionine from L-homocysteine (MetE route): step 1/1. Its function is as follows. Catalyzes the transfer of a methyl group from 5-methyltetrahydrofolate to homocysteine resulting in methionine formation. The polypeptide is 5-methyltetrahydropteroyltriglutamate--homocysteine methyltransferase (Escherichia coli O8 (strain IAI1)).